Reading from the N-terminus, the 141-residue chain is ATP synthase epsilon chain (141 aa).

Belongs to the ATPase epsilon chain family. F-type ATPases have 2 components, CF(1) - the catalytic core - and CF(0) - the membrane proton channel. CF(1) has five subunits: alpha(3), beta(3), gamma(1), delta(1), epsilon(1). CF(0) has three main subunits: a, b and c.

Its subcellular location is the cell membrane. Produces ATP from ADP in the presence of a proton gradient across the membrane. This is ATP synthase epsilon chain from Lactococcus lactis subsp. lactis (strain IL1403) (Streptococcus lactis).